Reading from the N-terminus, the 458-residue chain is Cysteine--tRNA ligase (458 aa).

Residue C29 coordinates Zn(2+). Positions 31–41 (MTVYDLCHLGH) match the 'HIGH' region motif. The Zn(2+) site is built by C213, H238, and E242. A 'KMSKS' region motif is present at residues 270–274 (KMSKS). K273 contacts ATP.

The protein belongs to the class-I aminoacyl-tRNA synthetase family. Monomer. The cofactor is Zn(2+).

Its subcellular location is the cytoplasm. The enzyme catalyses tRNA(Cys) + L-cysteine + ATP = L-cysteinyl-tRNA(Cys) + AMP + diphosphate. The protein is Cysteine--tRNA ligase of Acidovorax ebreus (strain TPSY) (Diaphorobacter sp. (strain TPSY)).